Consider the following 148-residue polypeptide: Ubiquitin-like protein 4A (148 aa).

The region spanning 1 to 76 (MQLTVKALKG…LNLMVKEQVA (76 aa)) is the Ubiquitin-like domain.

Component of the bag6/bat3 complex.

It is found in the cytoplasm. Its subcellular location is the cytosol. It localises to the nucleus. Its function is as follows. As part of a cytosolic protein quality control complex, the bag6/bat3 complex, maintains misfolded and hydrophobic patches-containing proteins in a soluble state and participates in their proper delivery to the endoplasmic reticulum or alternatively can promote their sorting to the proteasome where they undergo degradation. The bag6/bat3 complex is involved in the post-translational delivery of tail-anchored/type II transmembrane proteins to the endoplasmic reticulum membrane. Similarly, the bag6/bat3 complex also functions as a sorting platform for proteins of the secretory pathway that are mislocalized to the cytosol either delivering them to the proteasome for degradation or to the endoplasmic reticulum. The bag6/bat3 complex also plays a role in the endoplasmic reticulum-associated degradation (ERAD), a quality control mechanism that eliminates unwanted proteins of the endoplasmic reticulum through their retrotranslocation to the cytosol and their targeting to the proteasome. It maintains these retrotranslocated proteins in an unfolded yet soluble state condition in the cytosol to ensure their proper delivery to the proteasome. In Xenopus tropicalis (Western clawed frog), this protein is Ubiquitin-like protein 4A (ubl4a).